Reading from the N-terminus, the 1049-residue chain is FERM, ARHGEF and pleckstrin domain-containing protein 1 (1049 aa).

Positions 1–37 (MGEIEQKPTPASRLGAPENSGISTLERGQKPPPTPSG) are disordered. 2 positions are modified to phosphoserine: Ser-20 and Ser-23. The residue at position 24 (Thr-24) is a Phosphothreonine. An FERM domain is found at 40-320 (MTVKIQMLDD…EHHAFFRLFE (281 aa)). Residues Ser-340, Ser-373, Ser-389, Ser-403, Ser-427, Ser-433, and Ser-437 each carry the phosphoserine modification. Residues 361–537 (FERKHSKIHS…TDDEEEGRRK (177 aa)) form a disordered region. Polar residues-rich tracts occupy residues 371–395 (TRSLVSQPTAPNSEVPKQSPQSASL) and 402–412 (ESPSAQSCQQA). Residues 435–448 (SGSKAADGTAAAAP) are compositionally biased toward low complexity. Composition is skewed to polar residues over residues 473-492 (STGSLTGSPHLSELSINSQG) and 499-514 (VTLSPNLSPDNKQASP). Phosphoserine occurs at positions 513 and 517. A DH domain is found at 543 to 734 (KAYYIAKEVS…TEMVAQLHGT (192 aa)). The PH 1 domain occupies 763-860 (EFIRLGSLSK…WLEDIQMAID (98 aa)). A phosphoserine mark is found at Ser-837, Ser-876, and Ser-882. A disordered region spans residues 866 to 908 (NGPTPELLASSPPDNKSPDEATAADQESEDDLSASRTSLERQA). Phosphothreonine is present on Thr-887. Ser-893, Ser-900, and Ser-903 each carry phosphoserine. Positions 936 to 1033 (ENQLSGNLLR…WMEVIRSATS (98 aa)) constitute a PH 2 domain.

In terms of assembly, interacts with CADM1. Interacts with RAC1. As to expression, detected in forbrain (at protein level).

It is found in the cell membrane. The protein resides in the synapse. Its subcellular location is the synaptosome. It localises to the cytoplasm. The protein localises to the cytosol. It is found in the cell projection. The protein resides in the filopodium. Its subcellular location is the dendrite. It localises to the dendritic spine. Functionally, may play a role in semaphorin signaling. Functions as a guanine nucleotide exchange factor for RAC1. Plays a role in the assembly and disassembly of dendritic filopodia, the formation of dendritic spines, regulation of dendrite length and ultimately the formation of synapses. This Rattus norvegicus (Rat) protein is FERM, ARHGEF and pleckstrin domain-containing protein 1 (Farp1).